A 245-amino-acid polypeptide reads, in one-letter code: GATA zinc finger domain-containing protein 1 (245 aa).

The segment at 9 to 33 adopts a GATA-type zinc-finger fold; sequence CSMCKTNTSSMWKKGSQGEILCNNC. The span at 39-70 shows a compositional bias: low complexity; sequence TAAGGNNNNNSSSSTSGSSSYTGTTFASTSTS. A disordered region spans residues 39–110; sequence TAAGGNNNNN…PAAEKKVSTK (72 aa). Residues 71-80 show a composition bias toward polar residues; it reads QQSNGGNTKQ.

It is found in the nucleus. In terms of biological role, component of some chromatin complex recruited to chromatin sites methylated 'Lys-4' of histone H3 (H3K4me), with a preference for trimethylated form (H3K4me3). This Xenopus laevis (African clawed frog) protein is GATA zinc finger domain-containing protein 1 (gatad1).